The sequence spans 92 residues: Phospholemman (92 aa).

The first 20 residues, 1–20 (MAPLHHILVLCVGFLTTATA), serve as a signal peptide directing secretion. Residues 21 to 35 (EAPQEHDPFTYDYQS) lie on the Extracellular side of the membrane. A helical transmembrane segment spans residues 36–56 (LRIGGLIIAGILFILGILIVL). Residues 57 to 92 (SRRCRCKFNQQQRTGEPDEEEGTFRSSIRRLSTRRR) lie on the Cytoplasmic side of the membrane. The S-palmitoyl cysteine moiety is linked to residue cysteine 60. The residue at position 62 (cysteine 62) is an S-glutathionyl cysteine; alternate. The S-palmitoyl cysteine; alternate moiety is linked to residue cysteine 62. The tract at residues 65 to 92 (NQQQRTGEPDEEEGTFRSSIRRLSTRRR) is disordered. Threonine 79 carries the phosphothreonine modification. Serine 82 carries the phosphoserine modification. Serine 83 and serine 88 each carry phosphoserine; by PKA and PKC. A compositionally biased stretch (basic residues) spans 83-92 (SIRRLSTRRR). Threonine 89 carries the phosphothreonine; by PKC modification.

The protein belongs to the FXYD family. As to quaternary structure, homotetramer. Monomer. Regulatory subunit of the sodium/potassium-transporting ATPase (NKA) which is composed of a catalytic alpha subunit, a non-catalytic beta subunit and an additional regulatory subunit. The monomeric form associates with NKA while the oligomeric form does not. Interacts with the catalytic alpha-1 subunit ATP1A1. Also interacts with the catalytic alpha-2 and alpha-3 subunits ATP1A2 and ATP1A3. Very little interaction with the alpha subunits ATP1A1, ATP1A2 or ATP1A3 when phosphorylated at Ser-83. Interacts with non-catalytic beta-1 subunit ATP1B1. Oxidative stress decreases interaction with ATP1A1 but increases interaction with ATP1B1. Major plasma membrane substrate for cAMP-dependent protein kinase (PKA) and protein kinase C (PKC) in several different tissues. Phosphorylated in response to insulin and adrenergic stimulation. Phosphorylation at Ser-88 stimulates sodium/potassium-transporting ATPase activity while the unphosphorylated form inhibits sodium/potassium-transporting ATPase activity. Phosphorylation increases tetramerization, decreases binding to ATP1A1 and reduces inhibition of ATP1A1 activity. Phosphorylation at Ser-83 leads to greatly reduced interaction with ATP1A1, ATP1A2 and ATP1A3. May be phosphorylated by DMPK. Post-translationally, palmitoylation increases half-life and stability and is enhanced upon phosphorylation at Ser-88 by PKA. In terms of tissue distribution, present in heart, esophagus, stomach, aorta, skeletal muscle, smooth muscle, and liver but absent from brain and kidney.

Its subcellular location is the cell membrane. It is found in the sarcolemma. It localises to the apical cell membrane. The protein localises to the membrane. The protein resides in the caveola. Its subcellular location is the T-tubule. Functionally, associates with and regulates the activity of the sodium/potassium-transporting ATPase (NKA) which transports Na(+) out of the cell and K(+) into the cell. Inhibits NKA activity in its unphosphorylated state and stimulates activity when phosphorylated. Reduces glutathionylation of the NKA beta-1 subunit ATP1B1, thus reversing glutathionylation-mediated inhibition of ATP1B1. Contributes to female sexual development by maintaining the excitability of neurons which secrete gonadotropin-releasing hormone. This chain is Phospholemman, found in Canis lupus familiaris (Dog).